Reading from the N-terminus, the 97-residue chain is Co-chaperonin GroES (97 aa).

This sequence belongs to the GroES chaperonin family. As to quaternary structure, heptamer of 7 subunits arranged in a ring. Interacts with the chaperonin GroEL.

The protein resides in the cytoplasm. Its function is as follows. Together with the chaperonin GroEL, plays an essential role in assisting protein folding. The GroEL-GroES system forms a nano-cage that allows encapsulation of the non-native substrate proteins and provides a physical environment optimized to promote and accelerate protein folding. GroES binds to the apical surface of the GroEL ring, thereby capping the opening of the GroEL channel. This chain is Co-chaperonin GroES, found in Burkholderia vietnamiensis.